Here is a 279-residue protein sequence, read N- to C-terminus: Phosphatidylglycerol--prolipoprotein diacylglyceryl transferase (279 aa).

3 helical membrane passes run 18-38 (LSVRWYGIIIAVGILLGYFVA), 55-75 (IIFYSALFGFIAARIYFVIFQ), and 89-109 (IWHGGIAIHGGLIGGFIAGVI). An a 1,2-diacyl-sn-glycero-3-phospho-(1'-sn-glycerol)-binding site is contributed by Arg137. Helical transmembrane passes span 203-223 (LGETFFLYLTWYSIGRFFIEG) and 235-255 (IRVAQLVSILLILISISLIVY).

It belongs to the Lgt family.

The protein resides in the cell membrane. The enzyme catalyses L-cysteinyl-[prolipoprotein] + a 1,2-diacyl-sn-glycero-3-phospho-(1'-sn-glycerol) = an S-1,2-diacyl-sn-glyceryl-L-cysteinyl-[prolipoprotein] + sn-glycerol 1-phosphate + H(+). Its pathway is protein modification; lipoprotein biosynthesis (diacylglyceryl transfer). Functionally, catalyzes the transfer of the diacylglyceryl group from phosphatidylglycerol to the sulfhydryl group of the N-terminal cysteine of a prolipoprotein, the first step in the formation of mature lipoproteins. This is Phosphatidylglycerol--prolipoprotein diacylglyceryl transferase from Staphylococcus aureus (strain MSSA476).